The following is a 1145-amino-acid chain: DNA-directed RNA polymerase subunit beta (1145 aa).

Positions 1101–1112 (LPEERRVSSSKE) are enriched in basic and acidic residues. The segment at 1101–1145 (LPEERRVSSSKEEIEEEEEVEDNSDEFDETFLEEAEDDFSLDDED) is disordered. Acidic residues predominate over residues 1113–1145 (EIEEEEEVEDNSDEFDETFLEEAEDDFSLDDED).

Belongs to the RNA polymerase beta chain family. In terms of assembly, the RNAP catalytic core consists of 2 alpha, 1 beta, 1 beta' and 1 omega subunit. When a sigma factor is associated with the core the holoenzyme is formed, which can initiate transcription.

The enzyme catalyses RNA(n) + a ribonucleoside 5'-triphosphate = RNA(n+1) + diphosphate. Its function is as follows. DNA-dependent RNA polymerase catalyzes the transcription of DNA into RNA using the four ribonucleoside triphosphates as substrates. The protein is DNA-directed RNA polymerase subunit beta of Desulforamulus reducens (strain ATCC BAA-1160 / DSM 100696 / MI-1) (Desulfotomaculum reducens).